Consider the following 378-residue polypeptide: Uroporphyrinogen decarboxylase (378 aa).

Residues 40 to 44, Asp-90, Tyr-167, Ser-222, and His-355 contribute to the substrate site; that span reads RQAGR.

The protein belongs to the uroporphyrinogen decarboxylase family. In terms of assembly, homodimer.

It localises to the cytoplasm. It catalyses the reaction uroporphyrinogen III + 4 H(+) = coproporphyrinogen III + 4 CO2. The protein operates within porphyrin-containing compound metabolism; protoporphyrin-IX biosynthesis; coproporphyrinogen-III from 5-aminolevulinate: step 4/4. Functionally, catalyzes the decarboxylation of four acetate groups of uroporphyrinogen-III to yield coproporphyrinogen-III. The chain is Uroporphyrinogen decarboxylase from Psychrobacter cryohalolentis (strain ATCC BAA-1226 / DSM 17306 / VKM B-2378 / K5).